The following is a 284-amino-acid chain: tRNA pseudouridine synthase B (284 aa).

Aspartate 40 acts as the Nucleophile in catalysis.

The protein belongs to the pseudouridine synthase TruB family. Type 1 subfamily.

The enzyme catalyses uridine(55) in tRNA = pseudouridine(55) in tRNA. In terms of biological role, responsible for synthesis of pseudouridine from uracil-55 in the psi GC loop of transfer RNAs. This chain is tRNA pseudouridine synthase B, found in Helicobacter hepaticus (strain ATCC 51449 / 3B1).